A 118-amino-acid polypeptide reads, in one-letter code: Putative pterin-4-alpha-carbinolamine dehydratase (118 aa).

Belongs to the pterin-4-alpha-carbinolamine dehydratase family.

The catalysed reaction is (4aS,6R)-4a-hydroxy-L-erythro-5,6,7,8-tetrahydrobiopterin = (6R)-L-erythro-6,7-dihydrobiopterin + H2O. In Pseudomonas putida (strain ATCC 700007 / DSM 6899 / JCM 31910 / BCRC 17059 / LMG 24140 / F1), this protein is Putative pterin-4-alpha-carbinolamine dehydratase.